The sequence spans 478 residues: Zinc metalloproteinase/disintegrin VMP-II (478 aa).

Residues 1 to 20 form the signal peptide; sequence MIQVLLVTICLAVFPYQGSS. Positions 21 to 190 are excised as a propeptide; it reads IILESGNVND…KASQLNLTPE (170 aa). The Peptidase M12B domain maps to 197–393; sequence RYIELVIVAD…HNPQCMLNEP (197 aa). Ca(2+) contacts are provided by glutamate 200 and aspartate 284. Intrachain disulfides connect cysteine 308/cysteine 388, cysteine 348/cysteine 372, and cysteine 350/cysteine 355. Histidine 333 serves as a coordination point for Zn(2+). Glutamate 334 is a catalytic residue. Zn(2+)-binding residues include histidine 337 and histidine 343. Cysteine 388 and asparagine 391 together coordinate Ca(2+). Positions 394-405 are excised as a propeptide; the sequence is LGTDTVSRNELL. Residues 414-478 enclose the Disintegrin domain; the sequence is GSPANPCCDA…ADCPRNRFHA (65 aa). Intrachain disulfides connect cysteine 420–cysteine 443, cysteine 434–cysteine 440, cysteine 439–cysteine 464, and cysteine 452–cysteine 471. A Cell attachment site motif is present at residues 456 to 458; that stretch reads RGD.

Belongs to the venom metalloproteinase (M12B) family. P-II subfamily. P-IIe sub-subfamily. In terms of assembly, heterodimer; disulfide-linked (disintegrin). The cofactor is Zn(2+). Expressed by the venom gland.

It localises to the secreted. In terms of biological role, impairs hemostasis in the envenomed animal. Its function is as follows. This recombinant protein inhibits ADP-induced platelet aggregation in whole human blood and this effect is concentration-dependent with an IC(50) of 34 nM. The protein is Zinc metalloproteinase/disintegrin VMP-II of Crotalus viridis viridis (Prairie rattlesnake).